A 590-amino-acid polypeptide reads, in one-letter code: CTP synthase (590 aa).

Residues 1–278 (MRKHPQSATK…DAFVVRRLNL (278 aa)) are amidoligase domain. Ser20 contributes to the CTP binding site. A UTP-binding site is contributed by Ser20. Residues 21–26 (SLGKGL) and Asp78 each bind ATP. Mg(2+) contacts are provided by Asp78 and Glu152. CTP contacts are provided by residues 159–161 (DIE), 199–204 (KTKPTQ), and Lys235. UTP is bound by residues 199-204 (KTKPTQ) and Lys235. In terms of domain architecture, Glutamine amidotransferase type-1 spans 303-551 (RIALVGKYVD…VGAAIDYKSA (249 aa)). Position 366 (Gly366) interacts with L-glutamine. Cys393 functions as the Nucleophile; for glutamine hydrolysis in the catalytic mechanism. L-glutamine-binding positions include 394 to 397 (LGLQ), Glu416, and Arg477. Catalysis depends on residues His524 and Glu526. The interval 566–590 (EHLPNSSNQHRDGVERSFPAPAARG) is disordered.

This sequence belongs to the CTP synthase family. In terms of assembly, homotetramer.

The catalysed reaction is UTP + L-glutamine + ATP + H2O = CTP + L-glutamate + ADP + phosphate + 2 H(+). The enzyme catalyses L-glutamine + H2O = L-glutamate + NH4(+). It carries out the reaction UTP + NH4(+) + ATP = CTP + ADP + phosphate + 2 H(+). It participates in pyrimidine metabolism; CTP biosynthesis via de novo pathway; CTP from UDP: step 2/2. With respect to regulation, allosterically activated by GTP, when glutamine is the substrate; GTP has no effect on the reaction when ammonia is the substrate. The allosteric effector GTP functions by stabilizing the protein conformation that binds the tetrahedral intermediate(s) formed during glutamine hydrolysis. Inhibited by the product CTP, via allosteric rather than competitive inhibition. Catalyzes the ATP-dependent amination of UTP to CTP with either L-glutamine or ammonia as the source of nitrogen. Regulates intracellular CTP levels through interactions with the four ribonucleotide triphosphates. This chain is CTP synthase, found in Mycobacterium leprae (strain Br4923).